The primary structure comprises 475 residues: MASRIGLRMQLMREQAQQEEQRERMQQQAVMHYMQQQQQQQQQLGGPPTPAINTPVHFQSPPPVPGEVLKVQSYLENPTSYHLQQSQHQKVREYLSETYGNKFAAHVSPAQGSPKPAPAASPGVRAGHVLSTSAGNSAPNSPMAMLHISSNPEKEFDDVIDNIMRLDSVLGYINPEMQMPNTLPLSSSHLNVYSGDPQVTASMVGVTSSSCPADLTQKRELTDAESRALAKERQKKDNHNLIERRRRFNINDRIKELGMLIPKANDLDVRWNKGTILKASVDYIRRMQKDLQKSRELENHSRRLEMTNKQLWLRIQELEMQARVHGLPTTSPSGVNMAELAQQVVKQELPSEDGPGEALMLGPEVPEPEQMPALPPQAPLPSAAQPQSPFHHLDFSHGLSFGGGGDEGPTGYPDTLGTEHGSPFPNLSKKDLDLMLLDDSLLPLASDPLFSTMSPEASKASSRRSSFSMEEGDVL.

Residues 1 to 52 (MASRIGLRMQLMREQAQQEEQRERMQQQAVMHYMQQQQQQQQQLGGPPTPAI) form a disordered region. The segment at 1-166 (MASRIGLRMQ…DDVIDNIMRL (166 aa)) is interaction with ACSS2. Over residues 26-43 (QQQAVMHYMQQQQQQQQQ) the composition is skewed to low complexity. S108, S113, S121, and S137 each carry phosphoserine. Positions 135–152 (GNSAPNSPMAMLHISSNP) match the Nuclear export signal motif. The residue at position 141 (S141) is a Phosphoserine; by MTOR. Residues 155-164 (EFDDVIDNIM) are strong transcription activation domain. T182 is modified (phosphothreonine). Residue S210 is modified to Phosphoserine; by MTOR. C211 carries the post-translational modification S-(2,3-dicarboxypropyl)cysteine. The 54-residue stretch at 234-287 (QKKDNHNLIERRRRFNINDRIKELGMLIPKANDLDVRWNKGTILKASVDYIRRM) folds into the bHLH domain. Positions 244 to 247 (RRRR) match the Nuclear localization signal motif. Residues 297–318 (LENHSRRLEMTNKQLWLRIQEL) form a leucine-zipper region. S331 bears the Phosphoserine mark. A disordered region spans residues 351 to 429 (SEDGPGEALM…HGSPFPNLSK (79 aa)). Low complexity predominate over residues 380–389 (LPSAAQPQSP). Residues S422, S440, S465, S466, and S468 each carry the phosphoserine modification. Residues 445–468 (ASDPLFSTMSPEASKASSRRSSFS) are compositionally biased toward low complexity. The interval 445 to 475 (ASDPLFSTMSPEASKASSRRSSFSMEEGDVL) is disordered.

The protein belongs to the MiT/TFE family. Homodimer and heterodimer; with TFE3 or MITF. Interacts (when phosphorylated by MTOR) with YWHAZ; promoting retention in the cytosol. Interacts with Irgm1; promoting association between TFEB and PPP3CB and dephosphorylation. Interacts with small GTPases Rag (RagA/RRAGA, RagB/RRAGB, RagC/RRAGC and/or RagD/RRAGD); promoting its recruitment to lysosomal membrane in the presence of nutrients. Interacts with ACSS2. Post-translationally, phosphorylation at Ser-210 by MTOR via non-canonical mTORC1 pathway regulates its subcellular location and activity. When nutrients are present, phosphorylation by MTOR promotes association with 14-3-3/YWHA adapters and retention in the cytosol. Inhibition of mTORC1, starvation and lysosomal disruption, promotes dephosphorylation by calcineurin PPP3CB and translocation to the nucleus. Dephosphorylated by calcineurin PPP3CB in response to lysosomal Ca(2+) release. Irgm1 promotes dephosphorylation by calcineurin PPP3CB, resulting in TFEB nuclear translocation and stimulation of lysosomal biogenesis. Exported from the nucleus in a mTORC1-dependent manner in response to nutrient availability. In terms of processing, alkylated via a non-enzymatic covalent modification. Itaconate, an anti-inflammatory metabolite generated in response to lipopolysaccharide, alkylates Cys-211, preventing association with 14-3-3/YWHA adapters, thereby promoting nuclear translocation and activity. Sumoylated; does not affect dimerization with MITF. In terms of tissue distribution, widely expressed.

The protein localises to the nucleus. The protein resides in the cytoplasm. Its subcellular location is the cytosol. It localises to the lysosome membrane. In terms of biological role, transcription factor that acts as a master regulator of lysosomal biogenesis, autophagy, lysosomal exocytosis, lipid catabolism, energy metabolism and immune response. Specifically recognizes and binds E-box sequences (5'-CANNTG-3'); efficient DNA-binding requires dimerization with itself or with another MiT/TFE family member such as TFE3 or MITF. Involved in the cellular response to amino acid availability by acting downstream of MTOR: in the presence of nutrients, TFEB phosphorylation by MTOR promotes its cytosolic retention and subsequent inactivation. Upon starvation or lysosomal stress, inhibition of MTOR induces TFEB dephosphorylation, resulting in nuclear localization and transcription factor activity. Specifically recognizes and binds the CLEAR-box sequence (5'-GTCACGTGAC-3') present in the regulatory region of many lysosomal genes, leading to activate their expression, thereby playing a central role in expression of lysosomal genes. Regulates lysosomal positioning in response to nutrient deprivation by promoting the expression of PIP4P1. Acts as a positive regulator of autophagy by promoting expression of genes involved in autophagy. In association with TFE3, activates the expression of CD40L in T-cells, thereby playing a role in T-cell-dependent antibody responses in activated CD4(+) T-cells and thymus-dependent humoral immunity. Specifically recognizes the gamma-E3 box, a subset of E-boxes, present in the heavy-chain immunoglobulin enhancer. Plays a role in the signal transduction processes required for normal vascularization of the placenta. Involved in the immune response to infection by the bacteria S.aureus, S.typhimurium or S.enterica. Infection promotes itaconate production, leading to alkylation, resulting in nuclear localization and transcription factor activity. Itaconate-mediated alkylation activates TFEB-dependent lysosomal biogenesis, facilitating the bacteria clearance during the antibacterial innate immune response. In association with ACSS2, promotes the expression of genes involved in lysosome biogenesis and both autophagy upon glucose deprivation. The polypeptide is Transcription factor EB (Mus musculus (Mouse)).